The chain runs to 128 residues: Probable 4-amino-4-deoxy-L-arabinose-phosphoundecaprenol flippase subunit ArnF (128 aa).

The Cytoplasmic portion of the chain corresponds to 1-2; that stretch reads MG. A helical membrane pass occupies residues 3–23; sequence LMWGLFSVIIASVAQLSLGFA. Residues 24–35 are Periplasmic-facing; the sequence is ASHLPPMTHLWD. Residues 36–56 traverse the membrane as a helical segment; the sequence is FIAALLAFGLDARILLLGLLG. The Cytoplasmic segment spans residues 57-76; the sequence is YLLSVFCWYKTLHKLALSKA. Residues 77–97 traverse the membrane as a helical segment; it reads YALLSMSYVLVWIASMVLPGW. Topologically, residues 98–100 are periplasmic; that stretch reads EGT. The helical transmembrane segment at 101 to 121 threads the bilayer; that stretch reads FSLKALLGVACIMSGLMLIFL. At 122–128 the chain is on the cytoplasmic side; that stretch reads PMTKQRY.

The protein belongs to the ArnF family. In terms of assembly, heterodimer of ArnE and ArnF.

It localises to the cell inner membrane. The protein operates within bacterial outer membrane biogenesis; lipopolysaccharide biosynthesis. Translocates 4-amino-4-deoxy-L-arabinose-phosphoundecaprenol (alpha-L-Ara4N-phosphoundecaprenol) from the cytoplasmic to the periplasmic side of the inner membrane. The chain is Probable 4-amino-4-deoxy-L-arabinose-phosphoundecaprenol flippase subunit ArnF from Escherichia coli (strain 55989 / EAEC).